The sequence spans 1396 residues: DNA-directed RNA polymerase subunit beta' (1396 aa).

Zn(2+) contacts are provided by cysteine 70, cysteine 72, cysteine 85, and cysteine 88. Residues aspartate 460, aspartate 462, and aspartate 464 each contribute to the Mg(2+) site. Zn(2+) contacts are provided by cysteine 814, cysteine 889, cysteine 896, and cysteine 899.

Belongs to the RNA polymerase beta' chain family. In terms of assembly, the RNAP catalytic core consists of 2 alpha, 1 beta, 1 beta' and 1 omega subunit. When a sigma factor is associated with the core the holoenzyme is formed, which can initiate transcription. Mg(2+) is required as a cofactor. The cofactor is Zn(2+).

It carries out the reaction RNA(n) + a ribonucleoside 5'-triphosphate = RNA(n+1) + diphosphate. Functionally, DNA-dependent RNA polymerase catalyzes the transcription of DNA into RNA using the four ribonucleoside triphosphates as substrates. This Hahella chejuensis (strain KCTC 2396) protein is DNA-directed RNA polymerase subunit beta'.